Consider the following 360-residue polypeptide: Photosystem II protein D1 (360 aa).

3 consecutive transmembrane segments (helical) span residues 29 to 46 (YIGW…TATS), 118 to 133 (HFLL…EWEL), and 142 to 156 (WISV…AAAA). His118 serves as a coordination point for chlorophyll a. Pheophytin a is bound at residue Tyr126. Residues Asp170 and Glu189 each contribute to the [CaMn4O5] cluster site. Residues 197-218 (FHQLGVAGVFGGSLFSAMHGSL) traverse the membrane as a helical segment. His198 is a binding site for chlorophyll a. A quinone is bound by residues His215 and 264–265 (SF). His215 is a Fe cation binding site. Residue His272 participates in Fe cation binding. Residues 274–288 (FLGAWPVVGIWLTSM) traverse the membrane as a helical segment. [CaMn4O5] cluster is bound by residues His332, Glu333, Asp342, and Ala344. Positions 345-360 (SGDSCPVALVAPSING) are excised as a propeptide.

The protein belongs to the reaction center PufL/M/PsbA/D family. In terms of assembly, PSII is composed of 1 copy each of membrane proteins PsbA, PsbB, PsbC, PsbD, PsbE, PsbF, PsbH, PsbI, PsbJ, PsbK, PsbL, PsbM, PsbT, PsbX, PsbY, PsbZ, Psb30/Ycf12, at least 3 peripheral proteins of the oxygen-evolving complex and a large number of cofactors. It forms dimeric complexes. The cofactor is The D1/D2 heterodimer binds P680, chlorophylls that are the primary electron donor of PSII, and subsequent electron acceptors. It shares a non-heme iron and each subunit binds pheophytin, quinone, additional chlorophylls, carotenoids and lipids. D1 provides most of the ligands for the Mn4-Ca-O5 cluster of the oxygen-evolving complex (OEC). There is also a Cl(-1) ion associated with D1 and D2, which is required for oxygen evolution. The PSII complex binds additional chlorophylls, carotenoids and specific lipids.. In terms of processing, tyr-161 forms a radical intermediate that is referred to as redox-active TyrZ, YZ or Y-Z. C-terminally processed by CTPA; processing is essential to allow assembly of the oxygen-evolving complex and thus photosynthetic growth.

Its subcellular location is the plastid. It localises to the chloroplast thylakoid membrane. It carries out the reaction 2 a plastoquinone + 4 hnu + 2 H2O = 2 a plastoquinol + O2. Functionally, photosystem II (PSII) is a light-driven water:plastoquinone oxidoreductase that uses light energy to abstract electrons from H(2)O, generating O(2) and a proton gradient subsequently used for ATP formation. It consists of a core antenna complex that captures photons, and an electron transfer chain that converts photonic excitation into a charge separation. The D1/D2 (PsbA/PsbD) reaction center heterodimer binds P680, the primary electron donor of PSII as well as several subsequent electron acceptors. The protein is Photosystem II protein D1 of Palmaria palmata (Dulse).